A 319-amino-acid chain; its full sequence is 1-aminocyclopropane-1-carboxylate oxidase (319 aa).

The region spanning 153-253 (PTFGTKVSNY…RMSIASFYNP (101 aa)) is the Fe2OG dioxygenase domain. Fe cation-binding residues include H177, D179, and H234.

It belongs to the iron/ascorbate-dependent oxidoreductase family. The cofactor is Fe cation.

It carries out the reaction 1-aminocyclopropane-1-carboxylate + L-ascorbate + O2 = ethene + L-dehydroascorbate + hydrogen cyanide + CO2 + 2 H2O. The protein operates within alkene biosynthesis; ethylene biosynthesis via S-adenosyl-L-methionine; ethylene from S-adenosyl-L-methionine: step 2/2. The sequence is that of 1-aminocyclopropane-1-carboxylate oxidase (ACO) from Actinidia deliciosa (Kiwi).